Reading from the N-terminus, the 676-residue chain is Pescadillo homolog (676 aa).

A coiled-coil region spans residues 298–327; the sequence is IAAMADDEDEQEVEMAEADAEDDDEEENTE. Disordered regions lie at residues 298–338, 413–439, 478–502, and 515–676; these read IAAM…TAPD, PLANGASAAGAEDAATPQVQWPHSTKP, VKPKKGEYDPNLPLAAQQPDGEAEA, and EVDD…AERA. Residues 302-327 are compositionally biased toward acidic residues; it reads ADDEDEQEVEMAEADAEDDDEEENTE. In terms of domain architecture, BRCT spans 351-466; it reads EIASLFAPFT…KLLRPDLYAP (116 aa). A compositionally biased stretch (low complexity) spans 415-427; sequence ANGASAAGAEDAA. Acidic residues-rich tracts occupy residues 515–524, 539–557, and 565–577; these read EVDDDEDMDA, DVADSDDDDEDDSESDAEG, and FDDESEAESDISE. A coiled-coil region spans residues 568–676; the sequence is ESEAESDISE…EKAKAAAERA (109 aa). 4 stretches are compositionally biased toward basic and acidic residues: residues 579–608, 620–631, 643–659, and 666–676; these read EAARLQHQRELEAEATGKKLDVKAPTKKEQ, KRAEEEERDRQK, KRIEYGENKRDTESENL, and LEKAKAAAERA.

The protein belongs to the pescadillo family. In terms of assembly, component of the NOP7 complex, composed of ERB1, NOP7 and YTM1. The complex is held together by ERB1, which interacts with NOP7 via its N-terminal domain and with YTM1 via a high-affinity interaction between the seven-bladed beta-propeller domains of the 2 proteins. The NOP7 complex associates with the 66S pre-ribosome.

The protein localises to the nucleus. Its subcellular location is the nucleolus. The protein resides in the nucleoplasm. Functionally, component of the NOP7 complex, which is required for maturation of the 25S and 5.8S ribosomal RNAs and formation of the 60S ribosome. This Phaeosphaeria nodorum (strain SN15 / ATCC MYA-4574 / FGSC 10173) (Glume blotch fungus) protein is Pescadillo homolog.